A 252-amino-acid polypeptide reads, in one-letter code: 2-succinyl-6-hydroxy-2,4-cyclohexadiene-1-carboxylate synthase (252 aa).

It belongs to the AB hydrolase superfamily. MenH family. In terms of assembly, monomer.

It catalyses the reaction 5-enolpyruvoyl-6-hydroxy-2-succinyl-cyclohex-3-ene-1-carboxylate = (1R,6R)-6-hydroxy-2-succinyl-cyclohexa-2,4-diene-1-carboxylate + pyruvate. The protein operates within quinol/quinone metabolism; 1,4-dihydroxy-2-naphthoate biosynthesis; 1,4-dihydroxy-2-naphthoate from chorismate: step 3/7. It participates in quinol/quinone metabolism; menaquinone biosynthesis. Its function is as follows. Catalyzes a proton abstraction reaction that results in 2,5-elimination of pyruvate from 2-succinyl-5-enolpyruvyl-6-hydroxy-3-cyclohexene-1-carboxylate (SEPHCHC) and the formation of 2-succinyl-6-hydroxy-2,4-cyclohexadiene-1-carboxylate (SHCHC). The sequence is that of 2-succinyl-6-hydroxy-2,4-cyclohexadiene-1-carboxylate synthase from Escherichia coli (strain SMS-3-5 / SECEC).